The chain runs to 423 residues: Serine hydroxymethyltransferase (423 aa).

Position 121-123 (121-123 (GHI)) interacts with (6S)-5,6,7,8-tetrahydrofolate. Position 227 is an N6-(pyridoxal phosphate)lysine (lysine 227). Residue glutamate 242 participates in (6S)-5,6,7,8-tetrahydrofolate binding.

It belongs to the SHMT family. In terms of assembly, homodimer. Requires pyridoxal 5'-phosphate as cofactor.

It is found in the cytoplasm. The catalysed reaction is 5,10-methylenetetrahydromethanopterin + glycine + H2O = 5,6,7,8-tetrahydromethanopterin + L-serine. Its pathway is amino-acid biosynthesis; glycine biosynthesis; glycine from L-serine: step 1/1. In terms of biological role, catalyzes the reversible interconversion of serine and glycine with tetrahydromethanopterin (H4MPT) serving as the one-carbon carrier. Also exhibits a pteridine-independent aldolase activity toward beta-hydroxyamino acids, producing glycine and aldehydes, via a retro-aldol mechanism. This chain is Serine hydroxymethyltransferase, found in Methanothermobacter marburgensis (strain ATCC BAA-927 / DSM 2133 / JCM 14651 / NBRC 100331 / OCM 82 / Marburg) (Methanobacterium thermoautotrophicum).